The chain runs to 183 residues: Peptidyl-tRNA hydrolase (183 aa).

A tRNA-binding site is contributed by Tyr-14. The active-site Proton acceptor is His-19. The tRNA site is built by Tyr-55 and Asn-57.

It belongs to the PTH family. As to quaternary structure, monomer.

The protein localises to the cytoplasm. The enzyme catalyses an N-acyl-L-alpha-aminoacyl-tRNA + H2O = an N-acyl-L-amino acid + a tRNA + H(+). Functionally, hydrolyzes ribosome-free peptidyl-tRNAs (with 1 or more amino acids incorporated), which drop off the ribosome during protein synthesis, or as a result of ribosome stalling. Its function is as follows. Catalyzes the release of premature peptidyl moieties from peptidyl-tRNA molecules trapped in stalled 50S ribosomal subunits, and thus maintains levels of free tRNAs and 50S ribosomes. The sequence is that of Peptidyl-tRNA hydrolase from Thermus thermophilus (strain ATCC BAA-163 / DSM 7039 / HB27).